The primary structure comprises 93 residues: MQQSLAVKTFEDLFAELGDRARTRPADSTTVAALDGGVHALGKKLLEEAGEVWLAAEHESNDALAEEISQLLYWTQVLMISRGLSLDDVYRKL.

It belongs to the PRA-PH family.

The protein localises to the cytoplasm. The catalysed reaction is 1-(5-phospho-beta-D-ribosyl)-ATP + H2O = 1-(5-phospho-beta-D-ribosyl)-5'-AMP + diphosphate + H(+). It functions in the pathway amino-acid biosynthesis; L-histidine biosynthesis; L-histidine from 5-phospho-alpha-D-ribose 1-diphosphate: step 2/9. The chain is Phosphoribosyl-ATP pyrophosphatase (hisE) from Mycobacterium bovis (strain ATCC BAA-935 / AF2122/97).